A 411-amino-acid chain; its full sequence is Prostaglandin E2 receptor EP3 subtype (411 aa).

The Extracellular segment spans residues M1–A49. N18 and N32 each carry an N-linked (GlcNAc...) asparagine glycan. Residues F50–R74 traverse the membrane as a helical segment. Residues R75–C87 lie on the Cytoplasmic side of the membrane. Residues I88–L108 form a helical membrane-spanning segment. The Extracellular segment spans residues V109 to T127. The cysteines at positions 126 and 204 are disulfide-linked. A helical membrane pass occupies residues F128–V149. Topologically, residues E150–R171 are cytoplasmic. The helical transmembrane segment at A172 to G193 threads the bilayer. The Extracellular portion of the chain corresponds to Q194–N223. A glycan (N-linked (GlcNAc...) asparagine) is linked at N213. A helical transmembrane segment spans residues L224–I249. The Cytoplasmic portion of the chain corresponds to K250 to Q279. A helical membrane pass occupies residues L280–F303. The Extracellular segment spans residues N304–F323. A helical membrane pass occupies residues F324 to L345. The Cytoplasmic portion of the chain corresponds to R346–Q411. A compositionally biased stretch (basic and acidic residues) spans I367–K390. The tract at residues I367–I392 is disordered.

Belongs to the G-protein coupled receptor 1 family. In terms of assembly, interacts (via C-terminus) with MKLN1. In terms of tissue distribution, in the kidney cortex and medulla, adrenal gland and stomach. In kidney, expression is higher in tubules in the outer medulla, with lower levels in cortex. In kidney cortex, expression is restricted to distal tubules.

The protein resides in the cell membrane. Functionally, receptor for prostaglandin E2 (PGE2). Required for normal development of fever in response to pyrinogens, including IL1B, prostaglandin E2 and bacterial lipopolysaccharide (LPS). Required for normal potentiation of platelet aggregation by prostaglandin E2, and thus plays a role in the regulation of blood coagulation. Required for increased HCO3(-) secretion in the duodenum in response to mucosal acidification, and thereby contributes to the protection of the mucosa against acid-induced ulceration. Not required for normal kidney function, normal urine volume and osmolality. The protein is Prostaglandin E2 receptor EP3 subtype (PTGER3) of Oryctolagus cuniculus (Rabbit).